We begin with the raw amino-acid sequence, 212 residues long: Large ribosomal subunit protein uL3 (212 aa).

The segment at 117–142 (TSKGKGFQGNIKRHNQSRGPMTHGSR) is disordered.

This sequence belongs to the universal ribosomal protein uL3 family. Part of the 50S ribosomal subunit. Forms a cluster with proteins L14 and L19.

In terms of biological role, one of the primary rRNA binding proteins, it binds directly near the 3'-end of the 23S rRNA, where it nucleates assembly of the 50S subunit. The sequence is that of Large ribosomal subunit protein uL3 from Acholeplasma laidlawii (strain PG-8A).